A 113-amino-acid polypeptide reads, in one-letter code: uncharacterized protein (113 aa).

The HTH cro/C1-type domain occupies 16–70 (LYEYLEPLDLKINELAELLHVHRNSVSALINNNRKLTTEMAFRLAKVFDTTVDFW). The H-T-H motif DNA-binding region spans 27–46 (INELAELLHVHRNSVSALIN).

It belongs to the VapA/VapI family.

This is an uncharacterized protein from Escherichia coli O6:H1 (strain CFT073 / ATCC 700928 / UPEC).